The sequence spans 763 residues: Dual specificity tyrosine-phosphorylation-regulated kinase 1A (763 aa).

The residue at position 14 (Ser14) is a Phosphoserine. Residues 33–56 form a disordered region; sequence QMPHSHQYSDRRQPNISDQQVSAL. The span at 46–56 shows a compositional bias: polar residues; it reads PNISDQQVSAL. Tyr111 bears the Phosphotyrosine; by autocatalysis mark. The segment at 115–136 is disordered; the sequence is KKRRHQQGQGDDSSHKKERKVY. The short motif at 117 to 134 is the Bipartite nuclear localization signal element; sequence RRHQQGQGDDSSHKKERK. Tyr140 is modified (phosphotyrosine; by autocatalysis). Position 145 is a phosphotyrosine (Tyr145). Tyr159 is subject to Phosphotyrosine; by autocatalysis. The region spanning 159–479 is the Protein kinase domain; that stretch reads YEIDSLIGKG…PYYALQHSFF (321 aa). 165–173 provides a ligand contact to ATP; the sequence is IGKGSFGQV. Position 177 is a phosphotyrosine; by autocatalysis (Tyr177). Residue Lys188 coordinates ATP. Position 219 is a phosphotyrosine; by autocatalysis (Tyr219). Residue 238 to 241 coordinates ATP; sequence FEML. Asp287 serves as the catalytic Proton acceptor. At Ser310 the chain carries Phosphoserine; by autocatalysis. A phosphotyrosine; by autocatalysis mark is found at Tyr319 and Tyr321. Phosphothreonine; by autocatalysis is present on Thr402. Positions 408–442 are disordered; that stretch reads TKDGKREYKPPGTRKLHNILGVETGGPGGRRAGES. The residue at position 449 (Tyr449) is a Phosphotyrosine; by autocatalysis. A compositionally biased stretch (polar residues) spans 485–501; sequence EGTNTSNSVSTSPAMEQ. Disordered stretches follow at residues 485–540, 596–679, and 744–763; these read EGTN…HSGG, NALH…GNQA, and DREE…VASS. Positions 502 to 525 are enriched in low complexity; that stretch reads SQSSGTTSSTSSSSGGSSGTSNSG. A phosphoserine mark is found at Ser529 and Ser538. A histidine-rich domain (HRD) region spans residues 595–625; the sequence is QNALHHHHGNSSHHHHHHHHHHHHHGQQALG. Residues 598–620 are compositionally biased toward basic residues; sequence LHHHHGNSSHHHHHHHHHHHHHG. Residues 634–645 show a composition bias toward polar residues; sequence NSPTNSSSTQDS. A compositionally biased stretch (low complexity) spans 654–672; the sequence is SMTSLSSSTTSSSTSSSST. Residues Ser748 and Ser758 each carry the phosphoserine modification. Over residues 754 to 763 the composition is skewed to polar residues; the sequence is CVQQSPVASS.

Belongs to the protein kinase superfamily. CMGC Ser/Thr protein kinase family. MNB/DYRK subfamily. As to quaternary structure, interacts with RAD54L2/ARIP4. Interacts with CRY2. Interacts with RANBP9. Interacts with WDR68. Interacts with SIRT1. Post-translationally, can also autophosphorylate on serine and threonine residues (in vitro). Autophosphorylated on numerous tyrosine residues. As to expression, detected in brain (at protein level). Ubiquitous.

Its subcellular location is the nucleus speckle. The enzyme catalyses L-seryl-[protein] + ATP = O-phospho-L-seryl-[protein] + ADP + H(+). It carries out the reaction L-threonyl-[protein] + ATP = O-phospho-L-threonyl-[protein] + ADP + H(+). It catalyses the reaction L-tyrosyl-[protein] + ATP = O-phospho-L-tyrosyl-[protein] + ADP + H(+). The catalysed reaction is [DNA-directed RNA polymerase] + ATP = phospho-[DNA-directed RNA polymerase] + ADP + H(+). Its activity is regulated as follows. Inhibited by RANBP9. Inhibited by harmine, leucettamine B and leucettine L41. In terms of biological role, dual-specificity kinase which possesses both serine/threonine and tyrosine kinase activities. Exhibits a substrate preference for proline at position P+1 and arginine at position P-3. Plays an important role in double-strand breaks (DSBs) repair following DNA damage. Mechanistically, phosphorylates RNF169 and increases its ability to block accumulation of TP53BP1 at the DSB sites thereby promoting homologous recombination repair (HRR). Also acts as a positive regulator of transcription by acting as a CTD kinase that mediates phosphorylation of the CTD (C-terminal domain) of the large subunit of RNA polymerase II (RNAP II) POLR2A. May play a role in a signaling pathway regulating nuclear functions of cell proliferation. Modulates alternative splicing by phosphorylating the splice factor SRSF6. Has pro-survival function and negatively regulates the apoptotic process. Promotes cell survival upon genotoxic stress through phosphorylation of SIRT1. This in turn inhibits p53/TP53 activity and apoptosis. Phosphorylates SEPTIN4, SEPTIN5 and SF3B1 at 'Thr-434'. This Rattus norvegicus (Rat) protein is Dual specificity tyrosine-phosphorylation-regulated kinase 1A (Dyrk1a).